The following is a 273-amino-acid chain: Dermonecrotic toxin LdSicTox-alphaIB1av (273 aa).

His5 is a catalytic residue. Residues Glu25 and Asp27 each coordinate Mg(2+). The active-site Nucleophile is His41. Intrachain disulfides connect Cys45–Cys51 and Cys47–Cys190. Asp85 provides a ligand contact to Mg(2+). Asn250 carries an N-linked (GlcNAc...) asparagine glycan.

It belongs to the arthropod phospholipase D family. Class II subfamily. It depends on Mg(2+) as a cofactor. Expressed by the venom gland.

It localises to the secreted. It carries out the reaction an N-(acyl)-sphingosylphosphocholine = an N-(acyl)-sphingosyl-1,3-cyclic phosphate + choline. It catalyses the reaction an N-(acyl)-sphingosylphosphoethanolamine = an N-(acyl)-sphingosyl-1,3-cyclic phosphate + ethanolamine. The enzyme catalyses a 1-acyl-sn-glycero-3-phosphocholine = a 1-acyl-sn-glycero-2,3-cyclic phosphate + choline. The catalysed reaction is a 1-acyl-sn-glycero-3-phosphoethanolamine = a 1-acyl-sn-glycero-2,3-cyclic phosphate + ethanolamine. Dermonecrotic toxins cleave the phosphodiester linkage between the phosphate and headgroup of certain phospholipids (sphingolipid and lysolipid substrates), forming an alcohol (often choline) and a cyclic phosphate. This toxin acts on sphingomyelin (SM). It may also act on ceramide phosphoethanolamine (CPE), lysophosphatidylcholine (LPC) and lysophosphatidylethanolamine (LPE), but not on lysophosphatidylserine (LPS), and lysophosphatidylglycerol (LPG). It acts by transphosphatidylation, releasing exclusively cyclic phosphate products as second products. Induces dermonecrosis, hemolysis, increased vascular permeability, edema, inflammatory response, and platelet aggregation. The polypeptide is Dermonecrotic toxin LdSicTox-alphaIB1av (Loxosceles deserta (Desert recluse spider)).